The following is a 300-amino-acid chain: Protoheme IX farnesyltransferase (300 aa).

9 helical membrane-spanning segments follow: residues 28-48 (VVAL…PTIL), 50-70 (VQPL…AAAL), 100-120 (ALIF…VFTN), 122-142 (LTAW…TAYL), 149-169 (NIVI…TAVT), 176-196 (ALLL…ALAI), 222-242 (CILL…LVGM), 243-263 (SGPL…YKAW), and 280-300 (FSIY…YLWA).

It belongs to the UbiA prenyltransferase family. Protoheme IX farnesyltransferase subfamily.

The protein resides in the cell inner membrane. The catalysed reaction is heme b + (2E,6E)-farnesyl diphosphate + H2O = Fe(II)-heme o + diphosphate. It participates in porphyrin-containing compound metabolism; heme O biosynthesis; heme O from protoheme: step 1/1. In terms of biological role, converts heme B (protoheme IX) to heme O by substitution of the vinyl group on carbon 2 of heme B porphyrin ring with a hydroxyethyl farnesyl side group. The protein is Protoheme IX farnesyltransferase of Shewanella oneidensis (strain ATCC 700550 / JCM 31522 / CIP 106686 / LMG 19005 / NCIMB 14063 / MR-1).